The following is a 105-amino-acid chain: Chloroacetanilide N-alkylformylase 2, ferredoxin component (105 aa).

Residues 2-105 form the 2Fe-2S ferredoxin-type domain; sequence PKLVVVTREG…GLTVTIAPED (104 aa). 4 residues coordinate [2Fe-2S] cluster: C40, C46, C49, and C86.

It belongs to the adrenodoxin/putidaredoxin family. In terms of assembly, the chloroacetanilide N-alkylformylase multicomponent enzyme system is composed of an oxygenase component (CndA) and an electron transfer component formed by a ferredoxin reductase (CndC1) and a ferredoxin (CndB1). In vitro, chloroacetanilide N-alkylformylase assays in which CndB1 is substituted for CndB2 demonstrate that the two enzymes possess nearly identical activities. Requires [2Fe-2S] cluster as cofactor.

Functionally, component of the chloroacetanilide N-alkylformylase multicomponent enzyme system involved in the degradation of chloroacetanilide herbicides (N-alkoxyalkyl-N-chloroacetyl-substituted aniline derivatives). In vitro, functions as an intermediate electron transfer protein. In Rhizorhabdus wittichii (strain DC-6 / KACC 16600) (Sphingomonas wittichii), this protein is Chloroacetanilide N-alkylformylase 2, ferredoxin component.